The following is a 69-amino-acid chain: Conotoxin Eb6.20 (69 aa).

The first 17 residues, 1–17, serve as a signal peptide directing secretion; it reads VLIIAVLFLTACQLTTA. A propeptide spanning residues 18–41 is cleaved from the precursor; that stretch reads ETYSRGRQKHRARRSTDKNSKWTR. Intrachain disulfides connect C43/C57, C50/C61, and C56/C68.

Belongs to the conotoxin O1 superfamily. In terms of tissue distribution, expressed by the venom duct.

Its subcellular location is the secreted. This chain is Conotoxin Eb6.20 (E1), found in Conus ebraeus (Hebrew cone).